A 156-amino-acid chain; its full sequence is Small ribosomal subunit protein uS7 (156 aa).

The protein belongs to the universal ribosomal protein uS7 family. As to quaternary structure, part of the 30S ribosomal subunit. Contacts proteins S9 and S11.

In terms of biological role, one of the primary rRNA binding proteins, it binds directly to 16S rRNA where it nucleates assembly of the head domain of the 30S subunit. Is located at the subunit interface close to the decoding center, probably blocks exit of the E-site tRNA. This Geotalea daltonii (strain DSM 22248 / JCM 15807 / FRC-32) (Geobacter daltonii) protein is Small ribosomal subunit protein uS7.